A 170-amino-acid polypeptide reads, in one-letter code: Large ribosomal subunit protein uL11 (170 aa).

It belongs to the universal ribosomal protein uL11 family. In terms of assembly, part of the ribosomal stalk of the 50S ribosomal subunit. Interacts with L10 and the large rRNA to form the base of the stalk. L10 forms an elongated spine to which L12 dimers bind in a sequential fashion forming a multimeric L10(L12)X complex.

Its function is as follows. Forms part of the ribosomal stalk which helps the ribosome interact with GTP-bound translation factors. This chain is Large ribosomal subunit protein uL11, found in Desulfurococcus amylolyticus (strain DSM 18924 / JCM 16383 / VKM B-2413 / 1221n) (Desulfurococcus kamchatkensis).